The sequence spans 796 residues: uncharacterized protein (796 aa).

Its subcellular location is the mitochondrion. This is an uncharacterized protein from Dictyostelium discoideum (Social amoeba).